Reading from the N-terminus, the 98-residue chain is Cell division topological specificity factor (98 aa).

Belongs to the MinE family.

Functionally, prevents the cell division inhibition by proteins MinC and MinD at internal division sites while permitting inhibition at polar sites. This ensures cell division at the proper site by restricting the formation of a division septum at the midpoint of the long axis of the cell. In Moorella thermoacetica (strain ATCC 39073 / JCM 9320), this protein is Cell division topological specificity factor.